A 252-amino-acid polypeptide reads, in one-letter code: Imidazole glycerol phosphate synthase subunit HisF (252 aa).

Active-site residues include Asp-11 and Asp-130.

It belongs to the HisA/HisF family. In terms of assembly, heterodimer of HisH and HisF.

The protein localises to the cytoplasm. The catalysed reaction is 5-[(5-phospho-1-deoxy-D-ribulos-1-ylimino)methylamino]-1-(5-phospho-beta-D-ribosyl)imidazole-4-carboxamide + L-glutamine = D-erythro-1-(imidazol-4-yl)glycerol 3-phosphate + 5-amino-1-(5-phospho-beta-D-ribosyl)imidazole-4-carboxamide + L-glutamate + H(+). The protein operates within amino-acid biosynthesis; L-histidine biosynthesis; L-histidine from 5-phospho-alpha-D-ribose 1-diphosphate: step 5/9. Functionally, IGPS catalyzes the conversion of PRFAR and glutamine to IGP, AICAR and glutamate. The HisF subunit catalyzes the cyclization activity that produces IGP and AICAR from PRFAR using the ammonia provided by the HisH subunit. This is Imidazole glycerol phosphate synthase subunit HisF from Bacillus mycoides (strain KBAB4) (Bacillus weihenstephanensis).